Consider the following 207-residue polypeptide: Ribonuclease HII (207 aa).

The region spanning 10–199 (RLIAGVDEVG…VRNALLDAEL (190 aa)) is the RNase H type-2 domain. 3 residues coordinate a divalent metal cation: Asp16, Glu17, and Asp108.

The protein belongs to the RNase HII family. Mn(2+) is required as a cofactor. The cofactor is Mg(2+).

The protein resides in the cytoplasm. It carries out the reaction Endonucleolytic cleavage to 5'-phosphomonoester.. Its function is as follows. Endonuclease that specifically degrades the RNA of RNA-DNA hybrids. In Erwinia tasmaniensis (strain DSM 17950 / CFBP 7177 / CIP 109463 / NCPPB 4357 / Et1/99), this protein is Ribonuclease HII.